The following is a 201-amino-acid chain: Peroxiredoxin prdx-2 (201 aa).

The 159-residue stretch at 10–168 folds into the Thioredoxin domain; sequence AFIGKPAPQF…TLRLVQAFQF (159 aa). The Cysteine sulfenic acid (-SOH) intermediate role is filled by cysteine 55.

Belongs to the peroxiredoxin family. AhpC/Prx1 subfamily. Monomer and homodimer; disulfide-linked. Under nonstress conditions, present in the reduced monomeric form. Forms active hyperoxidized monomers and disulfide-linked homodimers upon oxidation by hydrogen peroxide. Forms active oxidized homodimers in response to the drug metformin. In terms of processing, the enzyme can be inactivated by further oxidation of the cysteine sulfenic acid (C(P)-SOH) to sulphinic acid (C(P)-SO2H) instead of its condensation to a disulfide bond. In terms of tissue distribution, expressed in the gonad, neurons and intestine (at protein level). Expressed in the pharyngeal inter-neuron I4 and the sensory interneuron I2. Expressed in the intestine, pharyngeal muscle 1, vulval muscle, body wall muscle, epithelial cells e1 and e3, and neurons in the head and tail.

Its subcellular location is the cytoplasm. The catalysed reaction is a hydroperoxide + [thioredoxin]-dithiol = an alcohol + [thioredoxin]-disulfide + H2O. With respect to regulation, activated following oxidation of the conserved redox-active cysteine residue, which subsequently allows for the oxidation and activation of substrates. In terms of biological role, thiol-specific peroxidase that catalyzes the reduction of hydrogen peroxide and organic hydroperoxides to water and alcohols, respectively. In I2 pharyngeal neurons, required for the inhibition of feeding in response to light and hydrogen peroxide. In the intestine, plays a role in protecting cells against oxidative stress by detoxifying peroxides such as hydrogen peroxide. In addition, plays a role in the recovery from oxidative stress induced by hydrogen peroxide. In its hyperoxidized form (induced by hydrogen peroxide), confers protection against heat stress. However, has a low tendency for overoxidation during the normal lifespan. Increases sensitivity to cytotoxicity caused by metalloids and heavy metals such as arsenic and cadmium by playing a role in inhibiting the expression of phase II detoxification genes such as gcs-1 in intestinal cells. In addition, in response to arsenite, promotes the secretion of the insulin ligand daf-28 into the pseudocoelom, which negatively regulates the activities of daf-16 and skn-1. Plays a role in promoting longevity. Plays a role in the mitohormetic pathway by promoting the activation of pmk-1 in response to the drug metformin. The protein is Peroxiredoxin prdx-2 of Caenorhabditis elegans.